Reading from the N-terminus, the 558-residue chain is N-acetylglucosamine-6-O-sulfatase (558 aa).

Position 101 is a 3-oxoalanine (Ser) (S101).

The protein belongs to the sulfatase family. The conversion to 3-oxoalanine (also known as C-formylglycine, FGly), of a serine or cysteine residue in prokaryotes and of a cysteine residue in eukaryotes, is critical for catalytic activity.

Functionally, exosulfatase involved in the degradation of the glycosaminoglycan (GAG) heparan sulfate (HS). Catalyzes the hydrolysis of the 6-sulfate groups of the N-acetyl-D-glucosamine 6-sulfate units. GAG-specific sulfatases play a key role in the persistence of the major human gut symbiont B.thetaiotaomicron in the host gastrointestinal tract. This is N-acetylglucosamine-6-O-sulfatase from Bacteroides thetaiotaomicron (strain ATCC 29148 / DSM 2079 / JCM 5827 / CCUG 10774 / NCTC 10582 / VPI-5482 / E50).